Consider the following 455-residue polypeptide: L-serine dehydratase (455 aa).

This sequence belongs to the iron-sulfur dependent L-serine dehydratase family. It depends on [4Fe-4S] cluster as a cofactor.

The enzyme catalyses L-serine = pyruvate + NH4(+). It functions in the pathway carbohydrate biosynthesis; gluconeogenesis. The sequence is that of L-serine dehydratase (sdaA) from Haemophilus influenzae (strain ATCC 51907 / DSM 11121 / KW20 / Rd).